A 471-amino-acid chain; its full sequence is G2/mitotic-specific cyclin-1 (471 aa).

The protein belongs to the cyclin family. Cyclin AB subfamily.

Essential for the control of the cell cycle at the G2/M (mitosis) transition. Interacts with the CDC2 protein kinase to form MPF. G2/M cyclins accumulate steadily during G2 and are abruptly destroyed at mitosis. This is G2/mitotic-specific cyclin-1 (CLB1) from Saccharomyces cerevisiae (strain ATCC 204508 / S288c) (Baker's yeast).